Consider the following 137-residue polypeptide: Small ribosomal subunit protein uS11 (137 aa).

Polar residues predominate over residues 1–11; it reads MPPKSRSTGPK. Disordered regions lie at residues 1-28 and 117-137; these read MPPK…PHGA and TISD…RRRV. Basic residues predominate over residues 12 to 21; that stretch reads KTQKARRRDK.

Belongs to the universal ribosomal protein uS11 family. In terms of assembly, part of the 30S ribosomal subunit. Interacts with proteins S7 and S18. Binds to IF-3.

Its function is as follows. Located on the platform of the 30S subunit, it bridges several disparate RNA helices of the 16S rRNA. Forms part of the Shine-Dalgarno cleft in the 70S ribosome. The polypeptide is Small ribosomal subunit protein uS11 (Rhodococcus opacus (strain B4)).